Here is a 352-residue protein sequence, read N- to C-terminus: Speedy protein E18 (352 aa).

Basic residues predominate over residues Met-1–Gly-12. Positions Met-1–Pro-90 are disordered. Residues Gly-16–Tyr-39 show a composition bias toward polar residues. Positions Asp-76–Pro-90 are enriched in acidic residues.

Belongs to the Speedy/Ringo family.

This Homo sapiens (Human) protein is Speedy protein E18.